The sequence spans 298 residues: MPICAPSSDSSASASSGLGARVWVLHGLALGAAAAAAAVAYLYRRPTGFRSRAVGIIPARFASTRFEGKPLVPILGKPMIQRTWERVMLASSLDHVVVATDDERIAECCRGFGADVIMTSASCKNGSERCCEALKKLDKHYDIVVNIQGDEPLIEPEIIDGVVMSLQRAPDAVFSTAVTSLKPEDAFDTNRVKCVVDNLGYAIYFSRGLIPFNKSGNANPKYPYLLHLGIAGFDSKFLKIYPELPPTPLQMEEDLEQLKVLENGYRMKVIKVDHDAHGVDAPEDVEKIEALMRTRNIQ.

A helical membrane pass occupies residues 22–42; it reads VWVLHGLALGAAAAAAAVAYL.

Belongs to the KdsB family. The cofactor is Mg(2+). In terms of tissue distribution, ubiquitous.

Its subcellular location is the membrane. The catalysed reaction is 3-deoxy-alpha-D-manno-oct-2-ulosonate + CTP = CMP-3-deoxy-beta-D-manno-octulosonate + diphosphate. The protein operates within nucleotide-sugar biosynthesis; CMP-3-deoxy-D-manno-octulosonate biosynthesis; CMP-3-deoxy-D-manno-octulosonate from 3-deoxy-D-manno-octulosonate and CTP: step 1/1. In terms of biological role, catalyzes the production of the sugar nucleotide CMP-3-deoxy-D-manno-octulosonate (CMP-KDO). CTP is the preferred nucleotide donor, and it can partially be replaced with UTP but not with ATP. Activates KDO during the biosynthesis of rhamnogalacturonan II (RG-II), a structurally complex pectic polysaccharide of the primary cell wall. RG-II is essential for the cell wall integrity of rapidly growing tissues and pollen tube growth and elongation. This chain is 3-deoxy-manno-octulosonate cytidylyltransferase, found in Zea mays (Maize).